The sequence spans 664 residues: Pentatricopeptide repeat-containing protein At1g10910, chloroplastic (664 aa).

Residues 1–72 constitute a chloroplast transit peptide; that stretch reads METPLLVGLE…KRHSNSYLAR (72 aa). PPR repeat units lie at residues 165–199, 200–235, 236–270, 271–305, 306–340, 341–375, 376–406, 411–445, and 446–480; these read NVYI…GLKP, DVVT…GIQM, DSVM…GHSP, NIYH…GLVP, NKVM…GYAE, NEMP…GVRS, DGYA…SETT, DLVM…AVSP, and DYNT…GHRL.

Belongs to the PPR family. P subfamily.

It is found in the plastid. The protein resides in the chloroplast. The chain is Pentatricopeptide repeat-containing protein At1g10910, chloroplastic from Arabidopsis thaliana (Mouse-ear cress).